Consider the following 546-residue polypeptide: Chaperonin GroEL 6 (546 aa).

Residues 30-33, Lys-51, 87-91, Gly-415, and Asp-496 each bind ATP; these read TLGP and DGTTT.

This sequence belongs to the chaperonin (HSP60) family. In terms of assembly, forms a cylinder of 14 subunits composed of two heptameric rings stacked back-to-back. Interacts with the co-chaperonin GroES.

The protein localises to the cytoplasm. The catalysed reaction is ATP + H2O + a folded polypeptide = ADP + phosphate + an unfolded polypeptide.. Functionally, together with its co-chaperonin GroES, plays an essential role in assisting protein folding. The GroEL-GroES system forms a nano-cage that allows encapsulation of the non-native substrate proteins and provides a physical environment optimized to promote and accelerate protein folding. In Bradyrhizobium diazoefficiens (strain JCM 10833 / BCRC 13528 / IAM 13628 / NBRC 14792 / USDA 110), this protein is Chaperonin GroEL 6.